A 239-amino-acid chain; its full sequence is Probable transcriptional regulatory protein Bcer98_0465 (239 aa).

This sequence belongs to the TACO1 family. YeeN subfamily.

The protein resides in the cytoplasm. The chain is Probable transcriptional regulatory protein Bcer98_0465 from Bacillus cytotoxicus (strain DSM 22905 / CIP 110041 / 391-98 / NVH 391-98).